Reading from the N-terminus, the 171-residue chain is Alpha-amylase/trypsin inhibitor CMd (171 aa).

The signal sequence occupies residues 1–24; the sequence is MACKSSRSLLLLATVMVSVFAAAA.

The protein belongs to the protease inhibitor I6 (cereal trypsin/alpha-amylase inhibitor) family. As to quaternary structure, heterotetramer of one CMa, one CMb and two CMd chains. In terms of processing, five disulfide bonds, which are essential for the inhibitor activity, are probably present. Endosperm.

The protein resides in the secreted. Functionally, part of a complex with inhibitory activity, but CMd is inactive as a separate subunit. The protein is Alpha-amylase/trypsin inhibitor CMd (IAT3) of Hordeum vulgare (Barley).